The following is a 297-amino-acid chain: Acetylglutamate kinase (297 aa).

Substrate is bound by residues 72 to 73 (GG), Arg94, and Asn193.

This sequence belongs to the acetylglutamate kinase family. ArgB subfamily.

The protein resides in the cytoplasm. It carries out the reaction N-acetyl-L-glutamate + ATP = N-acetyl-L-glutamyl 5-phosphate + ADP. It functions in the pathway amino-acid biosynthesis; L-arginine biosynthesis; N(2)-acetyl-L-ornithine from L-glutamate: step 2/4. Its function is as follows. Catalyzes the ATP-dependent phosphorylation of N-acetyl-L-glutamate. The sequence is that of Acetylglutamate kinase from Mycobacterium leprae (strain TN).